The sequence spans 196 residues: PRADC1-like protein (196 aa).

An N-terminal signal peptide occupies residues 1–18 (MLIAWLVLAATLSRSIRA). The PA domain maps to 73–171 (ITDPPGACQE…STLQRLKRVH (99 aa)). Residue Asn179 is glycosylated (N-linked (GlcNAc...) asparagine).

It localises to the secreted. Functionally, may be involved in iversification of muscle cell fates. This chain is PRADC1-like protein, found in Drosophila melanogaster (Fruit fly).